A 269-amino-acid chain; its full sequence is 5'-nucleotidase SurE (269 aa).

4 residues coordinate a divalent metal cation: aspartate 11, aspartate 12, serine 43, and asparagine 101.

The protein belongs to the SurE nucleotidase family. Requires a divalent metal cation as cofactor.

The protein localises to the cytoplasm. The enzyme catalyses a ribonucleoside 5'-phosphate + H2O = a ribonucleoside + phosphate. Functionally, nucleotidase that shows phosphatase activity on nucleoside 5'-monophosphates. This is 5'-nucleotidase SurE from Prochlorococcus marinus (strain AS9601).